A 480-amino-acid chain; its full sequence is MFGPFKPAPHIAELPAEKIDSTYKRLRWQVFAGIFFGYAAYYFVRANFDLAQPGLIQAGLYSKAELGVIGSAAGLAYGLSKFVMAGMSDRSNPRVFLPFGLLLSGLCMTLMGLFPWATSGIAIMWVMIFLNGWFQGMGWPPCGRTMVHWWSKSERGTIVSIWNTAHNIGGMVPGAMVLLASAIFFSTHGIEAQAKDVWQQSLYFPGIAAMIFAIPVYFVMRDTPQSCGLPSIEKWRNDYPDDYNEKTYENDLTAKEIFVTYVLKNKLLWYIAIANVFVYLIRYGVLKWSPVYLSEVKHFNIKGTAWAYTIYELAAVPGTLLCGWVSDKVFKGKRGLTGFIFMILTTAAVVAYWMNPATPEAELANYSAWYENPYQLTDFVLMTLIGFLIYGPVMLIGLHALELAPKKAAGTAAGFTGLFGYLGGTVSASAVIGWAAQHYGWDGGFYVMIGGGVLAVLLLLIVMVEEGKHKAKLGDTYGTK.

Residues 1–36 (MFGPFKPAPHIAELPAEKIDSTYKRLRWQVFAGIFF) lie on the Cytoplasmic side of the membrane. A helical membrane pass occupies residues 37 to 57 (GYAAYYFVRANFDLAQPGLIQ). Over 58–64 (AGLYSKA) the chain is Periplasmic. Residues 65–85 (ELGVIGSAAGLAYGLSKFVMA) form a helical membrane-spanning segment. Over 86 to 94 (GMSDRSNPR) the chain is Cytoplasmic. The chain crosses the membrane as a helical span at residues 95 to 113 (VFLPFGLLLSGLCMTLMGL). The Periplasmic portion of the chain corresponds to 114–121 (FPWATSGI). Residues 122–142 (AIMWVMIFLNGWFQGMGWPPC) form a helical membrane-spanning segment. At 143–161 (GRTMVHWWSKSERGTIVSI) the chain is on the cytoplasmic side. Residues 162 to 181 (WNTAHNIGGMVPGAMVLLAS) form a helical membrane-spanning segment. Topologically, residues 182 to 201 (AIFFSTHGIEAQAKDVWQQS) are periplasmic. The chain crosses the membrane as a helical span at residues 202–219 (LYFPGIAAMIFAIPVYFV). Over 220–274 (MRDTPQSCGLPSIEKWRNDYPDDYNEKTYENDLTAKEIFVTYVLKNKLLWYIAIA) the chain is Cytoplasmic. Residues 275 to 295 (NVFVYLIRYGVLKWSPVYLSE) form a helical membrane-spanning segment. The Periplasmic segment spans residues 296 to 300 (VKHFN). Residues 301-321 (IKGTAWAYTIYELAAVPGTLL) form a helical membrane-spanning segment. At 322 to 334 (CGWVSDKVFKGKR) the chain is on the cytoplasmic side. The chain crosses the membrane as a helical span at residues 335 to 354 (GLTGFIFMILTTAAVVAYWM). The Periplasmic segment spans residues 355 to 359 (NPATP). Residues 360–396 (EAELANYSAWYENPYQLTDFVLMTLIGFLIYGPVMLI) form a helical membrane-spanning segment. At 397–415 (GLHALELAPKKAAGTAAGF) the chain is on the cytoplasmic side. Residues 416–437 (TGLFGYLGGTVSASAVIGWAAQ) form a helical membrane-spanning segment. Over 438–442 (HYGWD) the chain is Periplasmic. A helical transmembrane segment spans residues 443-463 (GGFYVMIGGGVLAVLLLLIVM). The Cytoplasmic segment spans residues 464–479 (VEEGKHKAKLGDTYGT).

The protein belongs to the major facilitator superfamily. Organophosphate:Pi antiporter (OPA) (TC 2.A.1.4) family.

Its subcellular location is the cell inner membrane. Functionally, responsible for glycerol-3-phosphate uptake. The protein is Glycerol-3-phosphate transporter (glpT) of Haemophilus influenzae (strain ATCC 51907 / DSM 11121 / KW20 / Rd).